We begin with the raw amino-acid sequence, 498 residues long: Zinc finger protein 395 (498 aa).

Positions 129-165 (QKPLSSPIEQSLPTSPGATSTSAQRSVSRSIDVPKRR) are disordered. Positions 130-157 (KPLSSPIEQSLPTSPGATSTSAQRSVSR) are enriched in polar residues. A Nuclear export signal motif is present at residues 171–180 (MDEMMAAMVL). Residues 209-245 (KEGGDVSDSGSSTTSGHWSASSGVSTPSPPHTDASPK) are disordered. A compositionally biased stretch (low complexity) spans 214 to 231 (VSDSGSSTTSGHWSASSG). Residues 285-310 (YKCLWPNCGKLLRSIVGIKRHVKTQH) form a C2H2-type zinc finger.

The protein resides in the cytoplasm. The protein localises to the nucleus. The polypeptide is Zinc finger protein 395 (znf395) (Xenopus laevis (African clawed frog)).